A 466-amino-acid polypeptide reads, in one-letter code: Arginine biosynthesis bifunctional protein ArgJ, mitochondrial (466 aa).

Residues 1 to 9 (MSSLVLKRF) constitute a mitochondrion transit peptide. Substrate-binding residues include T183, K209, T232, E320, N461, and S466. The active-site Nucleophile is the T232.

Belongs to the ArgJ family. Heterodimer of an alpha and a beta chain. In terms of processing, the alpha and beta chains are autoproteolytically processed from a single precursor protein within the mitochondrion.

It is found in the mitochondrion matrix. It catalyses the reaction N(2)-acetyl-L-ornithine + L-glutamate = N-acetyl-L-glutamate + L-ornithine. The catalysed reaction is L-glutamate + acetyl-CoA = N-acetyl-L-glutamate + CoA + H(+). Its pathway is amino-acid biosynthesis; L-arginine biosynthesis; L-ornithine and N-acetyl-L-glutamate from L-glutamate and N(2)-acetyl-L-ornithine (cyclic): step 1/1. It participates in amino-acid biosynthesis; L-arginine biosynthesis; N(2)-acetyl-L-ornithine from L-glutamate: step 1/4. Functionally, catalyzes two activities which are involved in the cyclic version of arginine biosynthesis: the synthesis of acetylglutamate from glutamate and acetyl-CoA, and of ornithine by transacetylation between acetylornithine and glutamate. The chain is Arginine biosynthesis bifunctional protein ArgJ, mitochondrial from Laccaria bicolor (strain S238N-H82 / ATCC MYA-4686) (Bicoloured deceiver).